The following is a 308-amino-acid chain: D-alanine--D-alanine ligase (308 aa).

Residues 102–302 enclose the ATP-grasp domain; the sequence is KHVAKAAGIP…FGEFLRWMVE (201 aa). 128–183 serves as a coordination point for ATP; it reads PMKPPYVVKPVREGSSFGVVIVKEDQSHPPQVITSSDWRYGDRIMVERYVAGREFT. Positions 252, 269, and 271 each coordinate Mg(2+).

The protein belongs to the D-alanine--D-alanine ligase family. Mg(2+) serves as cofactor. The cofactor is Mn(2+).

Its subcellular location is the cytoplasm. The catalysed reaction is 2 D-alanine + ATP = D-alanyl-D-alanine + ADP + phosphate + H(+). It participates in cell wall biogenesis; peptidoglycan biosynthesis. Functionally, cell wall formation. The sequence is that of D-alanine--D-alanine ligase from Sinorhizobium medicae (strain WSM419) (Ensifer medicae).